The primary structure comprises 816 residues: Neuroligin-4, Y-linked (816 aa).

An N-terminal signal peptide occupies residues 1 to 43 (MLRPQGLLWLPLLFTSVCVMLNSNVLLWITALAIKFTLIDSQA). Topologically, residues 44–676 (QYPVVNTNYG…TKRDYSTELS (633 aa)) are extracellular. A glycan (N-linked (GlcNAc...) asparagine) is linked at asparagine 102. 2 cysteine pairs are disulfide-bonded: cysteine 110–cysteine 146 and cysteine 306–cysteine 317. The segment at 359–364 (QGEFLN) is interaction with NRXN1. Cysteine 476 and cysteine 510 are oxidised to a cystine. Asparagine 511 is a glycosylation site (N-linked (GlcNAc...) asparagine). The tract at residues 636–659 (TKRPAITPANNPKHSKDPHKTGPE) is disordered. Residues 649–658 (HSKDPHKTGP) are compositionally biased toward basic and acidic residues. A helical transmembrane segment spans residues 677–697 (VTIAVGASLLFLNILAFAALY). The Cytoplasmic segment spans residues 698 to 816 (YKKDKRRHET…LPHGHSTTRV (119 aa)). Serine 712 carries the post-translational modification Phosphoserine.

Belongs to the type-B carboxylesterase/lipase family. As to quaternary structure, homodimer. Interacts with NRXN1 in a calcium-dependent manner. Interaction with neurexins is mediated by heparan sulfate glycan modification on neurexin. Interacts through its C-terminus with DLG4/PSD-95 third PDZ domain. Expressed in fetal and adult brain, prostate and testis.

It localises to the cell membrane. It is found in the postsynaptic density membrane. Its function is as follows. Cell surface protein involved in cell-cell-interactions via its interactions with neurexin family members. This chain is Neuroligin-4, Y-linked (NLGN4Y), found in Homo sapiens (Human).